Reading from the N-terminus, the 103-residue chain is Serine rich endogenous peptide 9 (103 aa).

Positions 1 to 25 (MENIFFSKLTQVFIVALLCIFIYRT) are cleaved as a signal peptide. A disordered region spans residues 54–103 (IYVKPPPLKSKDSNQKGKRGETYYKPNSEIGTGPSHSGHGGSSIEHVSSP). A compositionally biased stretch (basic and acidic residues) spans 62–75 (KSKDSNQKGKRGET). The SCOOP motif motif lies at 82–96 (EIGTGPSHSGHGGSS). Low complexity predominate over residues 84 to 103 (GTGPSHSGHGGSSIEHVSSP). Positions 88–90 (SHS) match the SxS motif essential for MIK2 binding motif.

It belongs to the serine rich endogenous peptide (SCOOP) phytocytokine family. In terms of assembly, interacts with MIK2 (via extracellular leucine-rich repeat domain); this interaction triggers the formation of complex between MIK2 and the BAK1/SERK3 and SERK4 coreceptors, and subsequent BAK1 activation by phosphorylation. As to expression, mostly expressed in seedlings shoots and roots, and, to a lower extent, in leaves, but barely in flowers.

Its subcellular location is the cell membrane. It is found in the secreted. The protein localises to the extracellular space. The protein resides in the apoplast. In terms of biological role, brassicaceae-specific phytocytokine (plant endogenous peptide released into the apoplast) perceived by MIK2 in a BAK1/SERK3 and SERK4 coreceptors-dependent manner, that modulates various physiological and antimicrobial processes including growth prevention and reactive oxygen species (ROS) response regulation. The polypeptide is Serine rich endogenous peptide 9 (Arabidopsis thaliana (Mouse-ear cress)).